We begin with the raw amino-acid sequence, 349 residues long: 11-beta-hydroxysteroid dehydrogenase 1A (349 aa).

A helical; Signal-anchor for type II membrane protein membrane pass occupies residues 10-30; the sequence is LTAPFFTFFGLCFFLPPFYFF. Residues 54-80 and aspartate 105 each bind NADP(+); that span reads GASS…TARR. Serine 184 provides a ligand contact to substrate. The active-site Proton acceptor is tyrosine 197. NADP(+)-binding positions include 197 to 201 and lysine 201; that span reads YNASK.

This sequence belongs to the short-chain dehydrogenases/reductases (SDR) family. Expressed in the above-ground part of seedlings, especially in the vascular tissues. Also detected in the buds and silique pedicels. Highly induced in oil-accumulating tissues of maturing seeds.

The protein resides in the lipid droplet. It is found in the membrane. The enzyme catalyses an 11beta-hydroxysteroid + NADP(+) = an 11-oxosteroid + NADPH + H(+). The catalysed reaction is 17beta-estradiol + NADP(+) = estrone + NADPH + H(+). It catalyses the reaction corticosterone + NADP(+) = 11-dehydrocorticosterone + NADPH + H(+). It carries out the reaction cortisone + NADPH + H(+) = cortisol + NADP(+). Functionally, catalyzes 11-beta, 17-beta-hydroxysteroid and reduces 17-beta-ketosteroids. Involved in regulating plant growth and development, probably promoting or mediating brassinosteroid effects. Plays a role during seed maturation. The polypeptide is 11-beta-hydroxysteroid dehydrogenase 1A (HSD1) (Arabidopsis thaliana (Mouse-ear cress)).